A 145-amino-acid chain; its full sequence is UPF0763 protein WS1752 (145 aa).

Belongs to the UPF0763 family.

The protein is UPF0763 protein WS1752 of Wolinella succinogenes (strain ATCC 29543 / DSM 1740 / CCUG 13145 / JCM 31913 / LMG 7466 / NCTC 11488 / FDC 602W) (Vibrio succinogenes).